The chain runs to 456 residues: UPF0496 protein 4 (456 aa).

A helical transmembrane segment spans residues 195–217 (VLMRALYGIESVTVFVCSIFVAV). A disordered region spans residues 368–390 (QDSNVKQANGSSDESALVVPERT). A compositionally biased stretch (polar residues) spans 371–381 (NVKQANGSSDE).

It belongs to the ROH1 family.

It is found in the membrane. The polypeptide is UPF0496 protein 4 (Oryza sativa subsp. japonica (Rice)).